The sequence spans 148 residues: Hemoglobin subunit beta (148 aa).

The region spanning 3-148 (XWTDXERHVI…AVAALGKQYH (146 aa)) is the Globin domain. Heme b-binding residues include histidine 64 and histidine 93.

The protein belongs to the globin family. In terms of assembly, heterotetramer of two alpha chains and two beta chains. As to expression, red blood cells.

Involved in oxygen transport from gills to the various peripheral tissues. This chain is Hemoglobin subunit beta (hbb), found in Silurus asotus (Amur catfish).